Reading from the N-terminus, the 87-residue chain is Large ribosomal subunit protein bL27 (87 aa).

A disordered region spans residues 1–20 (MARKRGGSGSKNGRDSNPKY).

It belongs to the bacterial ribosomal protein bL27 family.

This chain is Large ribosomal subunit protein bL27 (rpmA), found in Treponema pallidum (strain Nichols).